Here is a 196-residue protein sequence, read N- to C-terminus: UPF0314 protein Oant_0840 (196 aa).

Helical transmembrane passes span 15–35, 65–85, 127–147, and 151–171; these read WGLG…WLYF, WYTL…TVIA, FGDS…GFLI, and LPTK…LIVI.

This sequence belongs to the UPF0314 family.

It localises to the cell membrane. This chain is UPF0314 protein Oant_0840, found in Brucella anthropi (strain ATCC 49188 / DSM 6882 / CCUG 24695 / JCM 21032 / LMG 3331 / NBRC 15819 / NCTC 12168 / Alc 37) (Ochrobactrum anthropi).